A 94-amino-acid chain; its full sequence is Integration host factor subunit beta (94 aa).

Belongs to the bacterial histone-like protein family. Heterodimer of an alpha and a beta chain.

Its function is as follows. This protein is one of the two subunits of integration host factor, a specific DNA-binding protein that functions in genetic recombination as well as in transcriptional and translational control. The sequence is that of Integration host factor subunit beta (ihfB) from Dickeya dadantii (strain 3937) (Erwinia chrysanthemi (strain 3937)).